The primary structure comprises 308 residues: MSGKPLHEKTKEWARRHVRLLEEVGVTPKLAVLLLNDDPVELETQRRYVSLKARDVREVGGEVEIYELVDVPPERRSKEALYLIERLNRRDDVTGILIQKPVPPFVDEDLLFQRLSPEKDVDALTPENKKRLLALFDLDRDLLPCTPAGILELLQMYGVEVKGRDVTVVGKGELVGKPLAVMLMQLDASVSVLHALTRDKLRYVKEADIVISAVGRPPELYRDNPWRLTGDMVKEGAVVVGVGGKVDPATGKWYFDVDEKSVAEKASYLTPNLGGVGLATRARLLKNLIRASYNVARATAAPRLLKAF.

170–172 is a binding site for NADP(+); it reads GKG.

This sequence belongs to the tetrahydrofolate dehydrogenase/cyclohydrolase family. As to quaternary structure, homodimer.

It catalyses the reaction (6R)-5,10-methylene-5,6,7,8-tetrahydrofolate + NADP(+) = (6R)-5,10-methenyltetrahydrofolate + NADPH. The catalysed reaction is (6R)-5,10-methenyltetrahydrofolate + H2O = (6R)-10-formyltetrahydrofolate + H(+). Its pathway is one-carbon metabolism; tetrahydrofolate interconversion. Functionally, catalyzes the oxidation of 5,10-methylenetetrahydrofolate to 5,10-methenyltetrahydrofolate and then the hydrolysis of 5,10-methenyltetrahydrofolate to 10-formyltetrahydrofolate. The sequence is that of Bifunctional protein FolD from Pyrobaculum calidifontis (strain DSM 21063 / JCM 11548 / VA1).